Here is a 573-residue protein sequence, read N- to C-terminus: Cytochrome P450 monooxygenase GME11363 (573 aa).

Residues isoleucine 10–proline 30 form a helical membrane-spanning segment. Cysteine 519 lines the heme pocket.

This sequence belongs to the cytochrome P450 family. Heme serves as cofactor.

It localises to the membrane. Its pathway is secondary metabolite biosynthesis. Functionally, cytochrome P450 monooxygenase; part of the gene cluster that mediates the biosynthesis of dibenzodioxocinones such as pestalotiollide B, a novel class of inhibitors against cholesterol ester transfer protein (CEPT). The biosynthesis initiates from condensation of acetate and malonate units catalyzed by the non-reducing PKS pks8/GME11356. Pks8/GME11356 lacks a thioesterase (TE) domain, which is important to the cyclizing of the third ring of atrochrysone carboxylic acid, and the esterase GME11355 might play the role of TE and catalyzes the cyclization reaction of the C ring. The lactamase-like protein GME11357 (or other beta-lactamases in Pestalotiopsis microspora) probably hydrolyzes the thioester bond between the ACP of pks8/GME11356 and the intermediate to release atrochrysone carboxylic acid, which is spontaneously dehydrates to form endocrocin anthrone. Endocrocin anthrone is further converted to emodin via the endocrocin intermediate. Emodin is then oxidized by several enzymes such as the Baeyer-Villiger oxidase GME11358, the oxidoreductase GME11367, the short chain dehydrogenase/reductase GME11373, as well as by other oxidoreductases from the cluster, to modify the A and C rings and open the B ring, and finally yield monodictyphenone. The prenyltransferase GME11375 may catalyze the addition reaction between the C5 side chains and the carbon bone of dibenzodioxocinones. The remaining biochemical reactions to the final product dibenzodioxocinones should be methylation catalyzed by methyltransferase GME11366 and reduction and lactonization reaction catalyzed by a series of oxidordeuctases. In Pestalotiopsis microspora, this protein is Cytochrome P450 monooxygenase GME11363.